We begin with the raw amino-acid sequence, 377 residues long: Trans-enoyl reductase FMN2 (377 aa).

An Enoyl reductase (ER) domain is found at 7–370; it reads NASGGYCLNS…DGVIRGKKLV (364 aa). A disordered region spans residues 143–173; that stretch reads LSDMTGNGRSNGYTNGHTNGHTNGHSKGEEE. Residues 144 to 155 are compositionally biased toward polar residues; it reads SDMTGNGRSNGY. Low complexity predominate over residues 156–167; sequence TNGHTNGHTNGH. Residues 186-189, 209-212, Tyr-227, and 274-275 contribute to the NADP(+) site; these read ASAS, SPAN, and LD.

It belongs to the zinc-containing alcohol dehydrogenase family.

It functions in the pathway secondary metabolite biosynthesis. Its function is as follows. Trans-enoyl reductase; part of the gene cluster that mediates the biosynthesis of fusamarins, isocoumarin derivatives that show moderate cytotoxicity with IC(50) values between 1 and 50 uM. The polyketide synthase FMN1 probably synthesizes two different polyketides, a tetra- and a pentaketide, containinga varying number of double bonds depending on the selective actions of the trans-enoyl reductase FMN2. Chain fusion will presumably be mediated by the KS domain before finally offloading is catalyzed by the alpha/beta hydrolase fold enzyme FMN3. The polypeptide is Trans-enoyl reductase FMN2 (Fusarium mangiferae (Mango malformation disease fungus)).